The following is a 471-amino-acid chain: MQLLDDDFLLDNDMAKTLYHDYAAQMPIIDFHCHLNPSEIYQNKNYTNITRIWLNEGTYGDHYKWRLMRANGVDEKYITGDGDDYLKFIEWAKTIENAYGNPLYEWTHLELRRFFHIDERLTAESAPRIWEKANQLLQTDDFKPRQLIKNSNVQVVCTTDDPASDLHYHQLLKPEEAANGFKTLPAMRPDQLMQIDRDGFGDYLKTLGKVAGVEIHDFATIVTALTQRFEFFNKMGGRLSDHSLLTYHFEEATPAELDAIVAKGINNAALSEHEINQYLTMLLEALMKLNTQFNWTMQFHINSDRDLNRPMFAKIGPDTGYDAVGTQPDIVNHISALYTKMQQTEDVPKSIFYSLNSNDWLELATMMGCFQGGTTQKLQLGAGWWFNDTAEGMTQQLQVFAQQSLLPHFVGMLTDSRSFLSYPRHEYFRRVLCSFYGRLVEQGRVPNDAAELGRVVQNIAYNNAHDYFDFF.

Belongs to the metallo-dependent hydrolases superfamily. Uronate isomerase family.

It catalyses the reaction D-glucuronate = D-fructuronate. The enzyme catalyses aldehydo-D-galacturonate = keto-D-tagaturonate. It participates in carbohydrate metabolism; pentose and glucuronate interconversion. This chain is Uronate isomerase, found in Latilactobacillus sakei subsp. sakei (strain 23K) (Lactobacillus sakei subsp. sakei).